A 228-amino-acid polypeptide reads, in one-letter code: 7-cyano-7-deazaguanine synthase (228 aa).

8–18 (LSGGLDSTTCL) provides a ligand contact to ATP. 4 residues coordinate Zn(2+): C188, C198, C201, and C204.

It belongs to the QueC family. Zn(2+) serves as cofactor.

It carries out the reaction 7-carboxy-7-deazaguanine + NH4(+) + ATP = 7-cyano-7-deazaguanine + ADP + phosphate + H2O + H(+). It functions in the pathway purine metabolism; 7-cyano-7-deazaguanine biosynthesis. Functionally, catalyzes the ATP-dependent conversion of 7-carboxy-7-deazaguanine (CDG) to 7-cyano-7-deazaguanine (preQ(0)). In Legionella pneumophila (strain Paris), this protein is 7-cyano-7-deazaguanine synthase.